The primary structure comprises 295 residues: (R)-3-hydroxydecanoyl-ACP:CoA transacylase (295 aa).

An AB hydrolase-1 domain is found at 28–254 (NTIILINGSL…VIRDAGHFLD (227 aa)).

It functions in the pathway polyester biosynthesis; polyhydroxyalkanoate biosynthesis. Its function is as follows. Catalyzes the transfer of the acyl moiety from in vitro synthesized 3-hydroxydecanoyl-CoA to acyl carrier protein. This is (R)-3-hydroxydecanoyl-ACP:CoA transacylase (phaG) from Pseudomonas putida (strain ATCC 47054 / DSM 6125 / CFBP 8728 / NCIMB 11950 / KT2440).